Reading from the N-terminus, the 157-residue chain is Putative dehydration-responsive element-binding protein 2H (157 aa).

A Nuclear localization signal motif is present at residues 5-21 (RKSRGTRDVAEILRKWR). The tract at residues 29-57 (ADSCIDGGGSKPIRKAPPKRSRKGCMKGK) is disordered. Positions 40-54 (PIRKAPPKRSRKGCM) are enriched in basic residues. A DNA-binding region (AP2/ERF) is located at residues 66–123 (DYTGVRQRTWGKWVAEIREPGRGAKLWLGTFSSSYEAALAYDEASKAIYGQSARLNLP).

This sequence belongs to the AP2/ERF transcription factor family. ERF subfamily.

It localises to the nucleus. Its function is as follows. Putative transcriptional activator that binds specifically to the DNA sequence 5'-[AG]CCGAC-3'. The chain is Putative dehydration-responsive element-binding protein 2H (DREB2H) from Arabidopsis thaliana (Mouse-ear cress).